The following is a 65-amino-acid chain: Large ribosomal subunit protein bL35 (65 aa).

Residues 1–43 (MPKMKTRRGAAKRFAKTGSGKFKRRKQGLRHILTKKTAKRKSR) show a composition bias toward basic residues. Positions 1–49 (MPKMKTRRGAAKRFAKTGSGKFKRRKQGLRHILTKKTAKRKSRLGQSAT) are disordered.

It belongs to the bacterial ribosomal protein bL35 family.

The chain is Large ribosomal subunit protein bL35 from Maridesulfovibrio salexigens (strain ATCC 14822 / DSM 2638 / NCIMB 8403 / VKM B-1763) (Desulfovibrio salexigens).